A 241-amino-acid chain; its full sequence is NLP effector protein 7 (241 aa).

An N-terminal signal peptide occupies residues 1–19 (MHLCALLIAAAGVLASVRA). Residues 105-115 (AIMYAWYFPKA) carry the Conserved undecapeptide motif motif. The Conserved heptapeptide motif motif lies at 125–131 (GSRHYWL). Residue Asn-144 is glycosylated (N-linked (GlcNAc...) asparagine).

The protein belongs to the Necrosis inducing protein (NPP1) family.

Its subcellular location is the secreted. Functionally, secreted effector that acts as a pathogen-associated molecular pattern (PAMP) recognized by the plant immune system. Induces necrosis in Nicotiana benthamiana leaves and can induce Phytophthora capsici resistance in Nicotiana benthamiana. Also significantly improves disease resistance of Arabidopsis thaliana to Hyaloperonospora arabidopsidis. causes an inhibition of plant growth which is typically associated with enhanced immunity when over-expressed in Arabidopsis. The protein is NLP effector protein 7 of Plasmopara viticola (Downy mildew of grapevine).